The primary structure comprises 1171 residues: Kinesin-like protein GA13060 (1171 aa).

Residues 1–24 (MASSISRNGGFCGALQRAPPPMPP) form a disordered region. A Kinesin motor domain is found at 40–400 (KVKVMLRVSD…IQIASRIHRL (361 aa)). Disordered regions lie at residues 737 to 774 (LLGQDMSLPPDGDEDQDSGPSEVPPALPLFDDPLGSRD), 798 to 820 (LVASRASSSHHQHQHHRPSSQRS), 932 to 955 (PAYRLTPSPPKQPSHSPSQGSLPS), 1043 to 1099 (TSSE…QRHR), and 1124 to 1143 (RHSHGVGGHKKHRHRHEGNG). A compositionally biased stretch (basic residues) spans 805–816 (SSHHQHQHHRPS). Residues 1043–1059 (TSSEAYDSGHDSNSTPR) show a composition bias toward polar residues. A compositionally biased stretch (basic residues) spans 1124-1139 (RHSHGVGGHKKHRHRH).

The protein belongs to the TRAFAC class myosin-kinesin ATPase superfamily. Kinesin family. KIF26 subfamily.

Its subcellular location is the cytoplasm. The protein localises to the cytoskeleton. The polypeptide is Kinesin-like protein GA13060 (Drosophila pseudoobscura pseudoobscura (Fruit fly)).